A 96-amino-acid polypeptide reads, in one-letter code: Large ribosomal subunit protein bL27 (96 aa).

Residues 1-9 (MLRLDLQFF) constitute a propeptide that is removed on maturation.

This sequence belongs to the bacterial ribosomal protein bL27 family. Post-translationally, the N-terminus is cleaved by ribosomal processing cysteine protease Prp.

The polypeptide is Large ribosomal subunit protein bL27 (Geobacillus sp. (strain WCH70)).